Reading from the N-terminus, the 589-residue chain is Aspartate--tRNA(Asp/Asn) ligase (589 aa).

An L-aspartate-binding site is contributed by Glu176. The segment at 200-203 is aspartate; it reads QLFK. Residue Arg222 participates in L-aspartate binding. ATP is bound by residues 222–224 and Gln231; that span reads RDE. His450 is an L-aspartate binding site. Glu484 is an ATP binding site. Arg491 is an L-aspartate binding site. 536 to 539 serves as a coordination point for ATP; the sequence is GLDR.

Belongs to the class-II aminoacyl-tRNA synthetase family. Type 1 subfamily. Homodimer.

It is found in the cytoplasm. The catalysed reaction is tRNA(Asx) + L-aspartate + ATP = L-aspartyl-tRNA(Asx) + AMP + diphosphate. In terms of biological role, aspartyl-tRNA synthetase with relaxed tRNA specificity since it is able to aspartylate not only its cognate tRNA(Asp) but also tRNA(Asn). Reaction proceeds in two steps: L-aspartate is first activated by ATP to form Asp-AMP and then transferred to the acceptor end of tRNA(Asp/Asn). In Bacillus cytotoxicus (strain DSM 22905 / CIP 110041 / 391-98 / NVH 391-98), this protein is Aspartate--tRNA(Asp/Asn) ligase.